The primary structure comprises 313 residues: Porphobilinogen deaminase (313 aa).

The residue at position 243 (Cys-243) is an S-(dipyrrolylmethanemethyl)cysteine.

This sequence belongs to the HMBS family. As to quaternary structure, monomer. Dipyrromethane is required as a cofactor.

The catalysed reaction is 4 porphobilinogen + H2O = hydroxymethylbilane + 4 NH4(+). It participates in porphyrin-containing compound metabolism; protoporphyrin-IX biosynthesis; coproporphyrinogen-III from 5-aminolevulinate: step 2/4. Tetrapolymerization of the monopyrrole PBG into the hydroxymethylbilane pre-uroporphyrinogen in several discrete steps. The chain is Porphobilinogen deaminase from Bordetella petrii (strain ATCC BAA-461 / DSM 12804 / CCUG 43448).